The chain runs to 191 residues: MQECGLVATDIACRRGDRILFRALSLDVKAGEIVHLAGANGIGKSSLIRILAGLLRPFAGTVERRGAIALSDERLALDGHLPLEDALRFWDRIDRAGRPEAEFGLDDLLDVPVRYLSTGQRKRAALARVAASGAPLWLLDEPLNGLDVHWSERAQEAIEAHCARGGAVVIASHQPLALERVRTLAIRNFQP.

An ABC transporter domain is found at 6–189; that stretch reads LVATDIACRR…RVRTLAIRNF (184 aa). 38–45 provides a ligand contact to ATP; that stretch reads GANGIGKS.

This sequence belongs to the ABC transporter superfamily. CcmA exporter (TC 3.A.1.107) family. In terms of assembly, the complex is composed of two ATP-binding proteins (CcmA) and two transmembrane proteins (CcmB).

The protein resides in the cell inner membrane. The enzyme catalyses heme b(in) + ATP + H2O = heme b(out) + ADP + phosphate + H(+). In terms of biological role, part of the ABC transporter complex CcmAB involved in the biogenesis of c-type cytochromes; once thought to export heme, this seems not to be the case, but its exact role is uncertain. Responsible for energy coupling to the transport system. The protein is Cytochrome c biogenesis ATP-binding export protein CcmA of Novosphingobium aromaticivorans (strain ATCC 700278 / DSM 12444 / CCUG 56034 / CIP 105152 / NBRC 16084 / F199).